Reading from the N-terminus, the 187-residue chain is GTP cyclohydrolase 1 (187 aa).

Positions 76, 79, and 148 each coordinate Zn(2+).

It belongs to the GTP cyclohydrolase I family. In terms of assembly, toroid-shaped homodecamer, composed of two pentamers of five dimers.

It catalyses the reaction GTP + H2O = 7,8-dihydroneopterin 3'-triphosphate + formate + H(+). Its pathway is cofactor biosynthesis; 7,8-dihydroneopterin triphosphate biosynthesis; 7,8-dihydroneopterin triphosphate from GTP: step 1/1. This chain is GTP cyclohydrolase 1, found in Streptococcus agalactiae serotype V (strain ATCC BAA-611 / 2603 V/R).